A 394-amino-acid chain; its full sequence is NAD(P)H-quinone oxidoreductase subunit H (394 aa).

Belongs to the complex I 49 kDa subunit family. As to quaternary structure, NDH-1 can be composed of about 15 different subunits; different subcomplexes with different compositions have been identified which probably have different functions.

Its subcellular location is the cellular thylakoid membrane. It carries out the reaction a plastoquinone + NADH + (n+1) H(+)(in) = a plastoquinol + NAD(+) + n H(+)(out). It catalyses the reaction a plastoquinone + NADPH + (n+1) H(+)(in) = a plastoquinol + NADP(+) + n H(+)(out). Its function is as follows. NDH-1 shuttles electrons from an unknown electron donor, via FMN and iron-sulfur (Fe-S) centers, to quinones in the respiratory and/or the photosynthetic chain. The immediate electron acceptor for the enzyme in this species is believed to be plastoquinone. Couples the redox reaction to proton translocation, and thus conserves the redox energy in a proton gradient. Cyanobacterial NDH-1 also plays a role in inorganic carbon-concentration. In Synechococcus sp. (strain CC9902), this protein is NAD(P)H-quinone oxidoreductase subunit H.